The chain runs to 203 residues: Urease accessory protein UreE (203 aa).

Residues 170 to 203 (EHHGHSHSHSHSHSHDHDHQHGPSCSHGHHHGHR) form a disordered region.

Belongs to the UreE family.

It is found in the cytoplasm. Its function is as follows. Involved in urease metallocenter assembly. Binds nickel. Probably functions as a nickel donor during metallocenter assembly. The sequence is that of Urease accessory protein UreE from Burkholderia mallei (strain SAVP1).